The primary structure comprises 305 residues: Putative cuticle collagen 90 (305 aa).

Disordered regions lie at residues Ala-95 to Gly-117 and Pro-146 to His-305. Triple-helical region stretches follow at residues Gly-96 to Ser-125, Gly-142 to Ala-204, Gly-208 to Asp-252, and Gly-256 to Asp-270. Residues Gln-150–Val-162 are compositionally biased toward low complexity. Residues Ala-278 to His-288 are compositionally biased toward basic and acidic residues.

The protein belongs to the cuticular collagen family. As to quaternary structure, collagen polypeptide chains are complexed within the cuticle by disulfide bonds and other types of covalent cross-links.

Its function is as follows. Nematode cuticles are composed largely of collagen-like proteins. The cuticle functions both as an exoskeleton and as a barrier to protect the worm from its environment. This chain is Putative cuticle collagen 90 (col-90), found in Caenorhabditis elegans.